The chain runs to 752 residues: MAKERIYELAKELKMPSKDLVNMANRQGMGVKSHMSSVTPDQAQQLRQLAKGGQKTTNNQHQPVKKNDGHNKQNNHQAQNHNQHHDHDKTQNERPQKKNNSRSNNGTKDNNQHQNNGGRFGGSLNNDQGRNGKRFNKKNKKNKKHNKNKRLREVAHKQPTQRKDKPLPEVLEYTDGMNAQDLGKILHRSPAEIVKKLFMLGVMINQNQSLDKDTIELLATDYGIEAKEKVQVDVSDIDKMFEDEQNNTEHQVTRPAVVTVMGHVDHGKTTLLDKLRHSHVTEHEAGGITQEIGAYQVHYNDQLITFLDTPGHAAFTEMRARGANITDITVLVVAADDGVMPQTVEAIHHAQAAQTPIIVAVNKIDKPGANPDRVTEELAKYNLIPEDWGGDTIFVKISAKFGKNLDELLDMILLQAEMLELKANPDQNAAGSVVEARLDQGRGSVATVLVQQGTLHVGDPIVVGNTFGRVRTMTNENGRRIKEATPSTPVEITGLNEVPEAGDRFVVFDDEKTARAAGEERAKRAMDKERQKTSHVTLDNLFATMKKGQMKTLPIIIKADVQGSVEALSQSLQKIKVDGVRVDIIHQAVGAINQSDVTLAEASNAVIIGFNVRPTAVAKTLADSNSIDIRLHRVIYDAIEEVEDAMKGMLEPVYKEETIGQVEVRQIYKASKVGTIAGGMVTSGKITRDAKVRLVRDGVVIYEGELGSLKRFKDDVKEVKQGYECGLTIENYNDIKEMDVIEAYKMKEVPVK.

Residues 26–167 are disordered; sequence RQGMGVKSHM…QPTQRKDKPL (142 aa). Residues 34–47 are compositionally biased toward polar residues; sequence HMSSVTPDQAQQLR. The span at 72–81 shows a compositional bias: low complexity; sequence KQNNHQAQNH. Residues 83–96 show a composition bias toward basic and acidic residues; it reads QHHDHDKTQNERPQ. Residues 101–129 show a composition bias toward polar residues; sequence SRSNNGTKDNNQHQNNGGRFGGSLNNDQG. Residues 131-150 show a composition bias toward basic residues; the sequence is NGKRFNKKNKKNKKHNKNKR. Positions 151–167 are enriched in basic and acidic residues; that stretch reads LREVAHKQPTQRKDKPL. Positions 253–422 constitute a tr-type G domain; the sequence is TRPAVVTVMG…LLQAEMLELK (170 aa). The G1 stretch occupies residues 262-269; the sequence is GHVDHGKT. A GTP-binding site is contributed by 262–269; the sequence is GHVDHGKT. The segment at 287–291 is G2; it reads GITQE. A G3 region spans residues 308-311; it reads DTPG. GTP contacts are provided by residues 308–312 and 362–365; these read DTPGH and NKID. The tract at residues 362-365 is G4; it reads NKID. The segment at 398–400 is G5; sequence SAK.

This sequence belongs to the TRAFAC class translation factor GTPase superfamily. Classic translation factor GTPase family. IF-2 subfamily.

The protein resides in the cytoplasm. Its function is as follows. One of the essential components for the initiation of protein synthesis. Protects formylmethionyl-tRNA from spontaneous hydrolysis and promotes its binding to the 30S ribosomal subunits. Also involved in the hydrolysis of GTP during the formation of the 70S ribosomal complex. This chain is Translation initiation factor IF-2, found in Limosilactobacillus reuteri (strain DSM 20016) (Lactobacillus reuteri).